A 249-amino-acid polypeptide reads, in one-letter code: Tegument protein UL51 homolog (249 aa).

The protein belongs to the herpesviridae UL51 family. As to quaternary structure, oligomerizes. Interacts with MDV019; this interaction mediates MDV019 incorporation to virions. Post-translationally, phosphorylated.

The protein resides in the virion tegument. It is found in the host cytoplasm. Its subcellular location is the host Golgi apparatus. Functionally, plays several roles during the time course of infection, including egress of virus particles from the perinuclear space and secondary envelopment of cytoplasmic capsids that bud into specific trans-Golgi network (TGN)-derived membranes. This Gallus gallus (Chicken) protein is Tegument protein UL51 homolog (MDV065).